Reading from the N-terminus, the 329-residue chain is Ubiquitin carboxyl-terminal hydrolase isozyme L5 (329 aa).

Residues E7–S225 form the UCH catalytic domain. K47 carries the N6-succinyllysine modification. C88 (nucleophile) is an active-site residue. K158 carries the N6-acetyllysine modification. The active-site Proton donor is H164. The residue at position 289 (K289) is an N6-succinyllysine. The ULD domain occupies N291–K319. The interaction with ADRM1 stretch occupies residues V313–K329.

Belongs to the peptidase C12 family. Component of the 19S (PA700) regulatory complex of the 26S proteasome. Interacts with ADRM1 and NFRKB; in vitro ADRM1 and NFRKB compete for interaction with UCHL5. Component of the INO80 complex; specifically part of a complex module associated with N-terminus of INO80.

It is found in the cytoplasm. The protein localises to the nucleus. It carries out the reaction Thiol-dependent hydrolysis of ester, thioester, amide, peptide and isopeptide bonds formed by the C-terminal Gly of ubiquitin (a 76-residue protein attached to proteins as an intracellular targeting signal).. Its activity is regulated as follows. Activated by ADRM1. Inhibited by interaction with NFRKB. Protease that specifically cleaves 'Lys-48'-linked polyubiquitin chains. Deubiquitinating enzyme associated with the 19S regulatory subunit of the 26S proteasome. Putative regulatory component of the INO80 complex; however is inactive in the INO80 complex and is activated by a transient interaction of the INO80 complex with the proteasome via ADRM1. This chain is Ubiquitin carboxyl-terminal hydrolase isozyme L5 (UCHL5), found in Homo sapiens (Human).